A 292-amino-acid polypeptide reads, in one-letter code: tRNA pseudouridine synthase B (292 aa).

The active-site Nucleophile is the Asp38.

The protein belongs to the pseudouridine synthase TruB family. Type 1 subfamily.

The catalysed reaction is uridine(55) in tRNA = pseudouridine(55) in tRNA. In terms of biological role, responsible for synthesis of pseudouridine from uracil-55 in the psi GC loop of transfer RNAs. This is tRNA pseudouridine synthase B from Streptococcus sanguinis (strain SK36).